Consider the following 1107-residue polypeptide: Unconventional myosin-Ib (1107 aa).

Residues 15–701 enclose the Myosin motor domain; it reads IGVGDMVLLE…TLFQLEDLRK (687 aa). Position 60 is a phosphoserine (Ser-60). Residue 108-115 coordinates ATP; it reads GESGAGKT. Residue Lys-287 forms a Glycyl lysine isopeptide (Lys-Gly) (interchain with G-Cter in SUMO1); alternate linkage. Residue Lys-287 forms a Glycyl lysine isopeptide (Lys-Gly) (interchain with G-Cter in SUMO2); alternate linkage. The interval 592 to 599 is actin-binding; it reads YIRCIKPN. IQ domains are found at residues 704–727, 728–749, 750–778, 780–807, and 808–837; these read LEDL…FLLM, KRSQ…RYQQ, IKSS…HQKR, KEAA…EEAR, and RKHA…ANAG. The TH1 domain maps to 923 to 1107; that stretch reads KALYPSSVGQ…NNRLLEVAVP (185 aa).

The protein belongs to the TRAFAC class myosin-kinesin ATPase superfamily. Myosin family. Prominent expression is seen in the brain, lung and liver. It is also expressed in the heart and testis. A high level expression is seen in virtually all neurons (but not glia) in the postnatal and adult mouse brain and in neuroblasts of the cerebellar external granular layer.

In terms of biological role, motor protein that may participate in process critical to neuronal development and function such as cell migration, neurite outgrowth and vesicular transport. This is Unconventional myosin-Ib (Myo1b) from Mus musculus (Mouse).